The chain runs to 423 residues: UDP-N-acetylglucosamine 1-carboxyvinyltransferase 1 (423 aa).

23–24 provides a ligand contact to phosphoenolpyruvate; that stretch reads KN. UDP-N-acetyl-alpha-D-glucosamine is bound at residue Arg-96. Cys-120 serves as the catalytic Proton donor. Residue Cys-120 is modified to 2-(S-cysteinyl)pyruvic acid O-phosphothioketal. UDP-N-acetyl-alpha-D-glucosamine contacts are provided by Asp-309 and Val-331.

Belongs to the EPSP synthase family. MurA subfamily.

It is found in the cytoplasm. The catalysed reaction is phosphoenolpyruvate + UDP-N-acetyl-alpha-D-glucosamine = UDP-N-acetyl-3-O-(1-carboxyvinyl)-alpha-D-glucosamine + phosphate. It functions in the pathway cell wall biogenesis; peptidoglycan biosynthesis. Functionally, cell wall formation. Adds enolpyruvyl to UDP-N-acetylglucosamine. The sequence is that of UDP-N-acetylglucosamine 1-carboxyvinyltransferase 1 from Streptococcus pyogenes serotype M3 (strain ATCC BAA-595 / MGAS315).